The following is a 281-amino-acid chain: ATP phosphoribosyltransferase (281 aa).

This sequence belongs to the ATP phosphoribosyltransferase family. Long subfamily. Requires Mg(2+) as cofactor.

The protein resides in the cytoplasm. It catalyses the reaction 1-(5-phospho-beta-D-ribosyl)-ATP + diphosphate = 5-phospho-alpha-D-ribose 1-diphosphate + ATP. Its pathway is amino-acid biosynthesis; L-histidine biosynthesis; L-histidine from 5-phospho-alpha-D-ribose 1-diphosphate: step 1/9. With respect to regulation, feedback inhibited by histidine. Its function is as follows. Catalyzes the condensation of ATP and 5-phosphoribose 1-diphosphate to form N'-(5'-phosphoribosyl)-ATP (PR-ATP). Has a crucial role in the pathway because the rate of histidine biosynthesis seems to be controlled primarily by regulation of HisG enzymatic activity. This is ATP phosphoribosyltransferase from Corynebacterium glutamicum (strain R).